The sequence spans 401 residues: Deoxyhypusine synthase-like protein (401 aa).

The protein belongs to the deoxyhypusine synthase family.

The chain is Deoxyhypusine synthase-like protein from Thermosynechococcus vestitus (strain NIES-2133 / IAM M-273 / BP-1).